Here is a 581-residue protein sequence, read N- to C-terminus: Proline--tRNA ligase (581 aa).

It belongs to the class-II aminoacyl-tRNA synthetase family. ProS type 1 subfamily. Homodimer.

Its subcellular location is the cytoplasm. It carries out the reaction tRNA(Pro) + L-proline + ATP = L-prolyl-tRNA(Pro) + AMP + diphosphate. Catalyzes the attachment of proline to tRNA(Pro) in a two-step reaction: proline is first activated by ATP to form Pro-AMP and then transferred to the acceptor end of tRNA(Pro). As ProRS can inadvertently accommodate and process non-cognate amino acids such as alanine and cysteine, to avoid such errors it has two additional distinct editing activities against alanine. One activity is designated as 'pretransfer' editing and involves the tRNA(Pro)-independent hydrolysis of activated Ala-AMP. The other activity is designated 'posttransfer' editing and involves deacylation of mischarged Ala-tRNA(Pro). The misacylated Cys-tRNA(Pro) is not edited by ProRS. The sequence is that of Proline--tRNA ligase from Rhodococcus opacus (strain B4).